Here is a 321-residue protein sequence, read N- to C-terminus: Isopenicillin N synthase (321 aa).

Residues 1–42 (MPVLMPSADVPTIDISPQLFGTDPTPRRTSRGRSTRPARGSG) form a disordered region. Isopenicillin N is bound by residues Arg-87, Tyr-91, and Tyr-188. Arg-87, Tyr-91, Tyr-188, His-213, and Asp-215 together coordinate N-[(5S)-5-amino-5-carboxypentanoyl]-L-cysteinyl-D-valine. A Fe2OG dioxygenase domain is found at 179–287 (TLSAVSMIRY…RLSLPFFLHA (109 aa)). Fe(2+)-binding residues include His-213, Asp-215, and His-269. Arg-278 serves as a coordination point for 2-oxoglutarate. Ser-280 serves as a coordination point for isopenicillin N. Ser-280 contributes to the N-[(5S)-5-amino-5-carboxypentanoyl]-L-cysteinyl-D-valine binding site.

It belongs to the iron/ascorbate-dependent oxidoreductase family. Fe cation serves as cofactor. Requires L-ascorbate as cofactor.

The catalysed reaction is N-[(5S)-5-amino-5-carboxypentanoyl]-L-cysteinyl-D-valine + O2 = isopenicillin N + 2 H2O. Its pathway is antibiotic biosynthesis; penicillin G biosynthesis; penicillin G from L-alpha-aminoadipate and L-cysteine and L-valine: step 2/3. Functionally, removes, in the presence of oxygen, 4 hydrogen atoms from delta-L-(alpha-aminoadipyl)-L-cysteinyl-D-valine (ACV) to form the azetidinone and thiazolidine rings of isopenicillin. This is Isopenicillin N synthase (pcbC) from Streptantibioticus cattleyicolor (Streptomyces cattleya).